We begin with the raw amino-acid sequence, 402 residues long: Propionate kinase (402 aa).

ATP-binding residues include asparagine 11 and lysine 18. Asparagine 11 provides a ligand contact to Mg(2+). Arginine 86 provides a ligand contact to substrate. The active-site Proton donor/acceptor is the aspartate 143. ATP contacts are provided by residues histidine 175, 203 to 207 (HLGNG), 278 to 280 (DLR), and 326 to 330 (GIGEN).

It belongs to the acetokinase family. TdcD subfamily. As to quaternary structure, homodimer. Mg(2+) serves as cofactor.

The catalysed reaction is propanoate + ATP = propanoyl phosphate + ADP. The protein operates within amino-acid degradation; L-threonine degradation via propanoate pathway; propanoate from L-threonine: step 4/4. Catalyzes the conversion of propionyl phosphate and ADP to propionate and ATP. The protein is Propionate kinase of Salmonella agona (strain SL483).